The chain runs to 1139 residues: Dual 3',5'-cyclic-AMP and -GMP phosphodiesterase beta (1139 aa).

2 disordered regions span residues 1–42 and 154–177; these read MGKV…NINK and GISE…STSN. Residues 1-429 are Cytoplasmic-facing; sequence MGKVEDFEEH…LNLNNWISSR (429 aa). The span at 9-22 shows a compositional bias: basic and acidic residues; it reads EHNKNSNQDIEKNV. Residues 29–42 are compositionally biased toward polar residues; the sequence is NSNTINDQNENINK. The chain crosses the membrane as a helical span at residues 430-450; the sequence is MIIIGIVMLILSFIIWPLTTW. Topologically, residues 451 to 462 are extracellular; the sequence is SLKTSTWGRETY. A helical transmembrane segment spans residues 463–483; it reads IIILFHTLMAINTLILIFFII. Topologically, residues 484 to 498 are cytoplasmic; it reads IGSTELCKYSECMSY. The chain crosses the membrane as a helical span at residues 499-519; that stretch reads VLFSLMVALWGLWNIAIGLTL. Residues 520-536 lie on the Extracellular side of the membrane; the sequence is EYNPNLSEMPTTTYELE. N-linked (GlcNAc...) asparagine glycosylation is present at N524. A helical transmembrane segment spans residues 537 to 557; the sequence is MIYVLTYIYGFLPLVIIDIFF. Residues 558 to 564 lie on the Cytoplasmic side of the membrane; sequence PSRTKYN. A helical transmembrane segment spans residues 565-585; that stretch reads WIIHLIFIFLNSSSIILVGSA. Over 586–592 the chain is Extracellular; it reads KPDFVPE. The chain crosses the membrane as a helical span at residues 593–613; the sequence is IYVVFRILAYTTLCIFLYIGS. Over 614-1139 the chain is Cytoplasmic; that stretch reads YTSELQIRYV…TLFFIKNVSD (526 aa). The 324-residue stretch at 775-1098 folds into the PDEase domain; that stretch reads INISQLTKMI…IMWDTLMKEE (324 aa). H847 functions as the Proton donor in the catalytic mechanism. A nucleoside 3',5'-cyclic phosphate is bound at residue 847–851; the sequence is HNTIH. Residues H851, H887, D888, and D1000 each contribute to the a divalent metal cation site. D888, D1000, and Q1052 together coordinate a nucleoside 3',5'-cyclic phosphate.

Belongs to the cyclic nucleotide phosphodiesterase family. A divalent metal cation serves as cofactor.

It localises to the cell membrane. The protein localises to the endoplasmic reticulum membrane. It carries out the reaction 3',5'-cyclic GMP + H2O = GMP + H(+). It catalyses the reaction 3',5'-cyclic AMP + H2O = AMP + H(+). It functions in the pathway purine metabolism; 3',5'-cyclic GMP degradation; GMP from 3',5'-cyclic GMP: step 1/1. It participates in purine metabolism; 3',5'-cyclic AMP degradation; AMP from 3',5'-cyclic AMP: step 1/1. Functionally, plays a role in signal transduction by regulating the intracellular concentration of cyclic nucleotides cAMP and cGMP. Catalyzes the hydrolysis of both cAMP and cGMP to 5'-AMP and 5'-GMP, respectively. By regulating cAMP levels during the asexual blood stage and, thus PKA activation, required for merozoite invasion of erythrocytes and for the parasite development immediately following invasion. The protein is Dual 3',5'-cyclic-AMP and -GMP phosphodiesterase beta of Plasmodium falciparum (isolate 3D7).